A 273-amino-acid polypeptide reads, in one-letter code: MTFDDLKIQTVKDQPDEKSNGKKAKGLQFLYSPWWCLAAATLGVLCLGLVVTIMVLGMQLSQVSDLLTQEQANLTHQKKKLEGQISARQQAEEASQESENELKEMIETLARKLNEKSKEQMELHHQNLNLQETLKRVANCSAPCPQDWIWHGENCYLFSSGSFNWEKSQEKCLSLDAKLLKINSTADLDFIQQAISYSSFPFWMGLSRRNPSYPWLWEDGSPLMPHLFRVRGAVSQTYPSGTCAYIQRGAVYAENCILAAFSICQKKANLRAQ.

The interval 1-22 (MTFDDLKIQTVKDQPDEKSNGK) is disordered. Over 1-36 (MTFDDLKIQTVKDQPDEKSNGKKAKGLQFLYSPWWC) the chain is Cytoplasmic. Residues cysteine 36 and cysteine 46 are each lipidated (S-palmitoyl cysteine). The chain crosses the membrane as a helical; Signal-anchor for type II membrane protein span at residues 37–57 (LAAATLGVLCLGLVVTIMVLG). The interval 58-150 (MQLSQVSDLL…SAPCPQDWIW (93 aa)) is neck. Topologically, residues 58 to 273 (MQLSQVSDLL…CQKKANLRAQ (216 aa)) are extracellular. The stretch at 64–123 (SDLLTQEQANLTHQKKKLEGQISARQQAEEASQESENELKEMIETLARKLNEKSKEQMEL) forms a coiled coil. N-linked (GlcNAc...) asparagine glycosylation is present at asparagine 73. An N-linked (GlcNAc...) (complex) asparagine glycan is attached at asparagine 139. Disulfide bonds link cysteine 144–cysteine 155, cysteine 172–cysteine 264, and cysteine 243–cysteine 256. Residues 151 to 265 (HGENCYLFSS…CILAAFSICQ (115 aa)) enclose the C-type lectin domain.

Homodimer; disulfide-linked. May form a hexamer composed of 3 homodimers. Interacts with HSP70. In terms of assembly, (Microbial infection) Binds to the head and beginning of the coiled stalk of N.meningitidis adhesin A (nadA) variant 3; binding can be abrogated by monoclonal antibodies against the specific regions of NadA. Binding occurs in protein microarrays, in solution and when LOX-1 is expressed on the cell surface. The intrachain disulfide-bonds prevent N-glycosylation at some sites. In terms of processing, N-glycosylated. As to expression, expressed at high level in endothelial cells and vascular-rich organs such as placenta, lung, liver and brain, aortic intima, bone marrow, spinal cord and substantia nigra. Also expressed at the surface of dendritic cells. Widely expressed at intermediate and low level.

The protein resides in the cell membrane. It localises to the membrane raft. It is found in the secreted. Functionally, receptor that mediates the recognition, internalization and degradation of oxidatively modified low density lipoprotein (oxLDL) by vascular endothelial cells. OxLDL is a marker of atherosclerosis that induces vascular endothelial cell activation and dysfunction, resulting in pro-inflammatory responses, pro-oxidative conditions and apoptosis. Its association with oxLDL induces the activation of NF-kappa-B through an increased production of intracellular reactive oxygen and a variety of pro-atherogenic cellular responses including a reduction of nitric oxide (NO) release, monocyte adhesion and apoptosis. In addition to binding oxLDL, it acts as a receptor for the HSP70 protein involved in antigen cross-presentation to naive T-cells in dendritic cells, thereby participating in cell-mediated antigen cross-presentation. Also involved in inflammatory process, by acting as a leukocyte-adhesion molecule at the vascular interface in endotoxin-induced inflammation. Also acts as a receptor for advanced glycation end (AGE) products, activated platelets, monocytes, apoptotic cells and both Gram-negative and Gram-positive bacteria. Its function is as follows. (Microbial infection) May serve as a receptor for adhesin A variant 3 (nadA) of N.meningitidis. In Homo sapiens (Human), this protein is Oxidized low-density lipoprotein receptor 1 (OLR1).